The following is a 183-amino-acid chain: Integrase-like protein y4lS (183 aa).

A Resolvase/invertase-type recombinase catalytic domain is found at 2-136 (ARIGYARTFT…EGIAAARKRG (135 aa)).

This sequence belongs to the site-specific recombinase resolvase family.

The sequence is that of Integrase-like protein y4lS from Sinorhizobium fredii (strain NBRC 101917 / NGR234).